A 243-amino-acid chain; its full sequence is Geranylgeranylglyceryl phosphate synthase (243 aa).

D22 and S51 together coordinate Mg(2+). Residues 169–175, 200–201, and 222–223 each bind sn-glycerol 1-phosphate; these read YLEAGSG, GG, and GT.

It belongs to the GGGP/HepGP synthase family. Group II subfamily. Mg(2+) serves as cofactor.

It localises to the cytoplasm. The enzyme catalyses sn-glycerol 1-phosphate + (2E,6E,10E)-geranylgeranyl diphosphate = sn-3-O-(geranylgeranyl)glycerol 1-phosphate + diphosphate. The protein operates within membrane lipid metabolism; glycerophospholipid metabolism. Functionally, prenyltransferase that catalyzes the transfer of the geranylgeranyl moiety of geranylgeranyl diphosphate (GGPP) to the C3 hydroxyl of sn-glycerol-1-phosphate (G1P). This reaction is the first ether-bond-formation step in the biosynthesis of archaeal membrane lipids. The polypeptide is Geranylgeranylglyceryl phosphate synthase (Methanosphaera stadtmanae (strain ATCC 43021 / DSM 3091 / JCM 11832 / MCB-3)).